Reading from the N-terminus, the 229-residue chain is Peroxiredoxin-like 2A (229 aa).

The tract at residues 14 to 112 (MWSIGVGAFG…DELGVPLYAV (99 aa)) is thioredoxin fold. Catalysis depends on redox-active residues Cys85 and Cys88.

Belongs to the peroxiredoxin-like PRXL2 family. PRXL2A subfamily. Expressed by the principal cells of the epididymis. Detected in the head region of epididymal sperm (at protein level). Expressed in bone marrow.

It is found in the cytoplasm. It localises to the secreted. In terms of biological role, involved in redox regulation of the cell. Acts as an antioxidant. Inhibits TNFSF11-induced NFKB1 and JUN activation and osteoclast differentiation. May affect bone resorption and help to maintain bone mass. Acts as a negative regulator of macrophage-mediated inflammation by inhibiting macrophage production of inflammatory cytokines, probably through suppression of the MAPK signaling pathway. The protein is Peroxiredoxin-like 2A of Rattus norvegicus (Rat).